The chain runs to 1465 residues: DNA polymerase III PolC-type (1465 aa).

The Exonuclease domain maps to 427–583 (YVVFDVETTG…YDAEATGRLL (157 aa)).

This sequence belongs to the DNA polymerase type-C family. PolC subfamily.

Its subcellular location is the cytoplasm. It catalyses the reaction DNA(n) + a 2'-deoxyribonucleoside 5'-triphosphate = DNA(n+1) + diphosphate. In terms of biological role, required for replicative DNA synthesis. This DNA polymerase also exhibits 3' to 5' exonuclease activity. In Streptococcus pyogenes serotype M12 (strain MGAS2096), this protein is DNA polymerase III PolC-type.